The primary structure comprises 221 residues: Large ribosomal subunit protein uL1 (221 aa).

The protein belongs to the universal ribosomal protein uL1 family. Part of the 50S ribosomal subunit.

Its function is as follows. Probably involved in E site tRNA release. Binds directly to 23S rRNA. Functionally, protein L1 is also a translational repressor protein, it controls the translation of its operon by binding to its mRNA. The polypeptide is Large ribosomal subunit protein uL1 (Sulfolobus acidocaldarius (strain ATCC 33909 / DSM 639 / JCM 8929 / NBRC 15157 / NCIMB 11770)).